The primary structure comprises 96 residues: Putative pterin-4-alpha-carbinolamine dehydratase (96 aa).

The protein belongs to the pterin-4-alpha-carbinolamine dehydratase family.

It carries out the reaction (4aS,6R)-4a-hydroxy-L-erythro-5,6,7,8-tetrahydrobiopterin = (6R)-L-erythro-6,7-dihydrobiopterin + H2O. The polypeptide is Putative pterin-4-alpha-carbinolamine dehydratase (Paraburkholderia phytofirmans (strain DSM 17436 / LMG 22146 / PsJN) (Burkholderia phytofirmans)).